The following is a 527-amino-acid chain: Amine oxidase [flavin-containing] A (527 aa).

The residue at position 1 (Met1) is an N-acetylmethionine. Residues 1-497 (MASREKTSIE…HTFWERNLPS (497 aa)) lie on the Cytoplasmic side of the membrane. Ser383 carries the post-translational modification Phosphoserine. S-8alpha-FAD cysteine is present on Cys406. A helical; Anchor for type IV membrane protein membrane pass occupies residues 498–518 (VTGLLKLIGFTTSVTALWIVA). The Mitochondrial intermembrane portion of the chain corresponds to 519–527 (YKFRLLRRS). Positions 520 to 522 (KFR) are interaction with membrane phospholipid headgroups.

The protein belongs to the flavin monoamine oxidase family. As to quaternary structure, monomer, homo- or heterodimer (containing two subunits of similar size). Each subunit contains a covalently bound flavin. Enzymatically active as monomer. FAD serves as cofactor.

Its subcellular location is the mitochondrion outer membrane. The enzyme catalyses a secondary aliphatic amine + O2 + H2O = a primary amine + an aldehyde + H2O2. The catalysed reaction is a primary methyl amine + O2 + H2O = an aldehyde + H2O2 + NH4(+). It carries out the reaction (R)-adrenaline + O2 + H2O = (R)-3,4-dihydroxymandelaldehyde + methylamine + H2O2. It catalyses the reaction dopamine + O2 + H2O = 3,4-dihydroxyphenylacetaldehyde + H2O2 + NH4(+). The enzyme catalyses tyramine + O2 + H2O = (4-hydroxyphenyl)acetaldehyde + H2O2 + NH4(+). The catalysed reaction is (R)-noradrenaline + O2 + H2O = (R)-3,4-dihydroxymandelaldehyde + H2O2 + NH4(+). It carries out the reaction serotonin + O2 + H2O = (5-hydroxyindol-3-yl)acetaldehyde + H2O2 + NH4(+). It catalyses the reaction kynuramine + O2 + H2O = 3-(2-aminophenyl)-3-oxopropanal + H2O2 + NH4(+). The enzyme catalyses tryptamine + O2 + H2O = indole-3-acetaldehyde + H2O2 + NH4(+). The catalysed reaction is 2-phenylethylamine + O2 + H2O = 2-phenylacetaldehyde + H2O2 + NH4(+). Functionally, catalyzes the oxidative deamination of primary and some secondary amine such as neurotransmitters, with concomitant reduction of oxygen to hydrogen peroxide and has important functions in the metabolism of neuroactive and vasoactive amines in the central nervous system and peripheral tissues. Preferentially oxidizes serotonin. Also catalyzes the oxidative deamination of kynuramine to 3-(2-aminophenyl)-3-oxopropanal that can spontaneously condense to 4-hydroxyquinoline. The protein is Amine oxidase [flavin-containing] A of Canis lupus familiaris (Dog).